Here is a 148-residue protein sequence, read N- to C-terminus: Cytochrome c-type biogenesis protein CcmE (148 aa).

Over 1–7 the chain is Cytoplasmic; it reads MTRKQRR. A helical; Signal-anchor for type II membrane protein transmembrane segment spans residues 8–28; sequence LYFVLLGMAALGGAVALVLTA. Residues 29-148 are Periplasmic-facing; sequence ISDSLVYFYS…QWNDGKQPKQ (120 aa). 2 residues coordinate heme: His-121 and Tyr-125.

This sequence belongs to the CcmE/CycJ family.

The protein localises to the cell inner membrane. Its function is as follows. Heme chaperone required for the biogenesis of c-type cytochromes. Transiently binds heme delivered by CcmC and transfers the heme to apo-cytochromes in a process facilitated by CcmF and CcmH. The protein is Cytochrome c-type biogenesis protein CcmE of Paramagnetospirillum magneticum (strain ATCC 700264 / AMB-1) (Magnetospirillum magneticum).